Consider the following 260-residue polypeptide: Thiazole synthase (260 aa).

Lysine 101 (schiff-base intermediate with DXP) is an active-site residue. 1-deoxy-D-xylulose 5-phosphate contacts are provided by residues glycine 162, alanine 188–glycine 189, and asparagine 210–threonine 211.

The protein belongs to the ThiG family. As to quaternary structure, homotetramer. Forms heterodimers with either ThiH or ThiS.

It localises to the cytoplasm. It carries out the reaction [ThiS sulfur-carrier protein]-C-terminal-Gly-aminoethanethioate + 2-iminoacetate + 1-deoxy-D-xylulose 5-phosphate = [ThiS sulfur-carrier protein]-C-terminal Gly-Gly + 2-[(2R,5Z)-2-carboxy-4-methylthiazol-5(2H)-ylidene]ethyl phosphate + 2 H2O + H(+). The protein operates within cofactor biosynthesis; thiamine diphosphate biosynthesis. Catalyzes the rearrangement of 1-deoxy-D-xylulose 5-phosphate (DXP) to produce the thiazole phosphate moiety of thiamine. Sulfur is provided by the thiocarboxylate moiety of the carrier protein ThiS. In vitro, sulfur can be provided by H(2)S. The sequence is that of Thiazole synthase from Acidithiobacillus ferrooxidans (strain ATCC 23270 / DSM 14882 / CIP 104768 / NCIMB 8455) (Ferrobacillus ferrooxidans (strain ATCC 23270)).